The following is a 618-amino-acid chain: Baculoviral IAP repeat-containing protein 2 (618 aa).

3 BIR repeats span residues 46 to 113 (ELYR…CSFI), 184 to 250 (EEAR…CPFL), and 269 to 336 (HAAR…CEFL). Residues Cys306, Cys309, His326, and Cys333 each coordinate Zn(2+). In terms of domain architecture, CARD spans 453 to 543 (MASDDLSLIR…TLYKNLFVDK (91 aa)). The RING-type zinc finger occupies 571–606 (CKVCMDKEVSVVFIPCGHLVVCQECAPSLRKCPICR).

Belongs to the IAP family. Interacts with DIABLO/SMAC and with PRSS25; these interactions inhibit apoptotic suppressor activity. Interacts with CASP9. Interacts (via BIR domains) with TRAF2; the interaction is required for IKBKE ubiquitination. Interacts with E2F1, RIPK1, RIPK2, RIPK3, RIPK4, BIRC5/survivin and USP19. HSP90AB1. Interacts with UBXN1. Interacts with GSK3B. Interacts with several death receptors, inclusing FAS, TNFRSF10A and TNFRSF10B. Recruited to TNFRSF10B in the absence of receptor stimulation. When TNFRSF10B is stimulated, further recruited to the receptor and cleaved by caspases. Proteolytic fragments remain associated with TNFRSF10B. Auto-ubiquitinated and degraded by the proteasome in apoptotic cells. Post-translationally, upon stimulation of death receptors, including TNFRSF10B, recruited to receptors and cleaved by caspases. Proteolytic fragments remain associated with the receptors. This cleavage presumably inactivates the protein. In terms of tissue distribution, present in many fetal and adult tissues. Mainly expressed in adult skeletal muscle, thymus, testis, ovary, and pancreas, low or absent in brain and peripheral blood leukocytes.

It localises to the cytoplasm. The protein resides in the nucleus. The enzyme catalyses S-ubiquitinyl-[E2 ubiquitin-conjugating enzyme]-L-cysteine + [acceptor protein]-L-lysine = [E2 ubiquitin-conjugating enzyme]-L-cysteine + N(6)-ubiquitinyl-[acceptor protein]-L-lysine.. The CARD domain inhibits the activation of E3 ubiquitin ligase activity by preventing RING domain dimerization and E2 ubiquitin donor binding and activation. The CARD domain-mediated autoinhibition of the E3 ubiquitin-protein ligase activity suppresses cell proliferation and migration. USP19 regulates the stability of BIRC2/c-IAP1 by preventing its ubiquitination. Multi-functional protein which regulates not only caspases and apoptosis, but also modulates inflammatory signaling and immunity, mitogenic kinase signaling, and cell proliferation, as well as cell invasion and metastasis. Acts as an E3 ubiquitin-protein ligase regulating NF-kappa-B signaling and regulates both canonical and non-canonical NF-kappa-B signaling by acting in opposite directions: acts as a positive regulator of the canonical pathway and suppresses constitutive activation of non-canonical NF-kappa-B signaling. The target proteins for its E3 ubiquitin-protein ligase activity include: RIPK1, RIPK2, RIPK3, RIPK4, CASP3, CASP7, CASP8, TRAF2, DIABLO/SMAC, MAP3K14/NIK, MAP3K5/ASK1, IKBKG/NEMO, IKBKE and MXD1/MAD1. Can also function as an E3 ubiquitin-protein ligase of the NEDD8 conjugation pathway, targeting effector caspases for neddylation and inactivation. Acts as an important regulator of innate immune signaling via regulation of Toll-like receptors (TLRs), Nodlike receptors (NLRs) and RIG-I like receptors (RLRs), collectively referred to as pattern recognition receptors (PRRs). Protects cells from spontaneous formation of the ripoptosome, a large multi-protein complex that has the capability to kill cancer cells in a caspase-dependent and caspase-independent manner. Suppresses ripoptosome formation by ubiquitinating RIPK1 and CASP8. Can stimulate the transcriptional activity of E2F1. Plays a role in the modulation of the cell cycle. In Homo sapiens (Human), this protein is Baculoviral IAP repeat-containing protein 2 (BIRC2).